The chain runs to 644 residues: Cell pattern formation-associated protein StuA (644 aa).

Positions 18–33 (ATAHAPASAAPSGISH) are enriched in low complexity. Disordered regions lie at residues 18 to 58 (ATAH…PGYP) and 86 to 120 (QLPAMSSSGPSPSLSGAQSYAPHSFDHTGQVAPPG). Positions 38–47 (PQSSMMQPGQ) are enriched in polar residues. Residues 87–104 (LPAMSSSGPSPSLSGAQS) show a composition bias toward low complexity. One can recognise an HTH APSES-type domain in the interval 124 to 230 (RVTATLWEDE…HDIGALLYHP (107 aa)). Positions 158 to 179 (GTKLLNVAGMTRGRRDGILKSE) form a DNA-binding region, H-T-H motif. Positions 239–644 (GSAAMAAVDR…HTMTAQRARR (406 aa)) are disordered. The segment covering 253–269 (SMQTQRYISGPTTSQPP) has biased composition (polar residues). Low complexity predominate over residues 315 to 328 (SASSIMGMSNSGSS). Composition is skewed to polar residues over residues 334–357 (ANVQTPQGSQPLSIDTGLSNTRSV), 371–383 (QAISYGSNQSYDN), and 395–404 (PGQYNTQGQS). Positions 456-465 (EGDHEHDNEY) are enriched in basic and acidic residues. Residues 509 to 524 (GSGRATPRTTTTSQTQ) are compositionally biased toward low complexity. The span at 525–544 (WNSGYPTPQRQGPPSSNLYN) shows a compositional bias: polar residues. Positions 584–612 (KRGRDDDDEDPYRPDSVQSDDMGGLKRRK) are nuclear localization domain. Residues 635–644 (HTMTAQRARR) show a composition bias toward polar residues.

This sequence belongs to the EFG1/PHD1/stuA family.

It is found in the nucleus. Functionally, transcription factor that regulates asexual reproduction. Binds the StuA-response elements (StRE) with the consensus sequence 5'-(A/T)CGCG(T/A)N(A/C)-3' at the promoters of target genes. Required for pathogenicity and positively regulates the synthesis of the mycotoxin alternariol. Acts as a positive regulator of Tox3 but is not required for the expression of ToxA. Also acts as a central regulator of carbon metabolism including glycolysis, the TCA cycle, and amino acid synthesis. The protein is Cell pattern formation-associated protein StuA of Phaeosphaeria nodorum (strain SN15 / ATCC MYA-4574 / FGSC 10173) (Glume blotch fungus).